The primary structure comprises 354 residues: Protein sex-lethal (354 aa).

The tract at residues Met1–Gly20 is disordered. RRM domains lie at Thr127–Pro205 and Thr213–Glu293.

As to quaternary structure, part of a complex containing fl(2)d, Sxl and vir. Interacts with nito. Interacts with Unr; cooperates with Sxl to prevent translation of msl-2 transcripts. Interacts with how; promoting nuclear retention of msl-2 transcripts. In terms of tissue distribution, the embryo-specific isoform is not expressed in the pole cells, which are the progenitors of the germline.

The protein localises to the nucleus. Its subcellular location is the cytoplasm. In terms of biological role, sex determination switch protein, which controls sexual development and dosage compensation in females. Sxl protein is only active in females: it is inactive in males throughout development. Acts as a mRNA-binding protein, which specifically binds to a subset of pre-mRNAs and mRNAs and regulates their processing and/or translation. Promotes sexual development by controlling the female-specific alternative splicing of the transformer (tra) pre-mRNA: binds tightly to a characteristic uridine-rich polypyrimidine tract at the non-sex specific 3' splice site in one of the tra introns, preventing the general splicing factor U2AF from binding to this site and forcing it to bind to the female-specific 3' splice site. Acts as an inhibitor of dosage compensation in females by preventing production of msl-2 protein, an essential component of the MSL complex, the complex that mediates X-chromosome dosage compensation. Specifially binds to uridine stretches in both the 5'- and 3'-UTR of msl-2 transcripts. Sxl first acts at the splicing level by promoting retention of an intron in the 5' UTR of msl-2 pre-mRNA. The retained intron contains Sxl-binding sites that are required for subsequent steps of repression: after msl-2 mRNA export into the cytoplasm, Sxl coordinates its translational repression by targeting early steps of translation initiation. Together with how, Sxl also prevents production of msl-2 protein by preventing nuclear export of msl-2 transcripts. The polypeptide is Protein sex-lethal (Drosophila subobscura (Fruit fly)).